The sequence spans 403 residues: Riboflavin biosynthesis protein RibBA (403 aa).

The tract at residues 1–204 (MKNKVFASIG…IGELVNYRRR (204 aa)) is DHBP synthase. Residues 30–31 (RE), aspartate 35, 143–147 (RTGHT), and glutamate 167 each bind D-ribulose 5-phosphate. A Mg(2+)-binding site is contributed by glutamate 31. Histidine 146 serves as a coordination point for Mg(2+). A GTP cyclohydrolase II region spans residues 205–403 (TEKFISEIVN…EKMGHMLKKV (199 aa)). Residue 255–259 (RVHSS) coordinates GTP. The Zn(2+) site is built by cysteine 260, cysteine 271, and cysteine 273. Residues glutamine 276, 298-300 (EGR), and threonine 320 contribute to the GTP site. Aspartate 332 (proton acceptor; for GTP cyclohydrolase activity) is an active-site residue. Arginine 334 serves as the catalytic Nucleophile; for GTP cyclohydrolase activity. Residues threonine 355 and lysine 360 each contribute to the GTP site.

This sequence in the N-terminal section; belongs to the DHBP synthase family. The protein in the C-terminal section; belongs to the GTP cyclohydrolase II family. Mg(2+) is required as a cofactor. The cofactor is Mn(2+). Zn(2+) serves as cofactor.

It carries out the reaction D-ribulose 5-phosphate = (2S)-2-hydroxy-3-oxobutyl phosphate + formate + H(+). The catalysed reaction is GTP + 4 H2O = 2,5-diamino-6-hydroxy-4-(5-phosphoribosylamino)-pyrimidine + formate + 2 phosphate + 3 H(+). It participates in cofactor biosynthesis; riboflavin biosynthesis; 2-hydroxy-3-oxobutyl phosphate from D-ribulose 5-phosphate: step 1/1. Its pathway is cofactor biosynthesis; riboflavin biosynthesis; 5-amino-6-(D-ribitylamino)uracil from GTP: step 1/4. Its function is as follows. Catalyzes the conversion of D-ribulose 5-phosphate to formate and 3,4-dihydroxy-2-butanone 4-phosphate. Functionally, catalyzes the conversion of GTP to 2,5-diamino-6-ribosylamino-4(3H)-pyrimidinone 5'-phosphate (DARP), formate and pyrophosphate. This is Riboflavin biosynthesis protein RibBA from Endomicrobium trichonymphae.